A 176-amino-acid chain; its full sequence is NAD(P)H-quinone oxidoreductase subunit 6, chloroplastic (176 aa).

5 helical membrane passes run 10-30 (FLLV…VLLP), 32-52 (PIYS…FYIL), 61-81 (AQLL…VMFM), 92-112 (LWTV…ISLI), and 152-172 (FFLP…GAIA).

Belongs to the complex I subunit 6 family. In terms of assembly, NDH is composed of at least 16 different subunits, 5 of which are encoded in the nucleus.

The protein resides in the plastid. It is found in the chloroplast thylakoid membrane. It carries out the reaction a plastoquinone + NADH + (n+1) H(+)(in) = a plastoquinol + NAD(+) + n H(+)(out). The catalysed reaction is a plastoquinone + NADPH + (n+1) H(+)(in) = a plastoquinol + NADP(+) + n H(+)(out). In terms of biological role, NDH shuttles electrons from NAD(P)H:plastoquinone, via FMN and iron-sulfur (Fe-S) centers, to quinones in the photosynthetic chain and possibly in a chloroplast respiratory chain. The immediate electron acceptor for the enzyme in this species is believed to be plastoquinone. Couples the redox reaction to proton translocation, and thus conserves the redox energy in a proton gradient. The polypeptide is NAD(P)H-quinone oxidoreductase subunit 6, chloroplastic (ndhG) (Solanum lycopersicum (Tomato)).